A 291-amino-acid chain; its full sequence is Formamidopyrimidine-DNA glycosylase (291 aa).

Residue Pro2 is the Schiff-base intermediate with DNA of the active site. Glu3 acts as the Proton donor in catalysis. Lys58 (proton donor; for beta-elimination activity) is an active-site residue. DNA contacts are provided by His104, Arg127, and Arg172. An FPG-type zinc finger spans residues Phe257–Arg291. Residue Arg281 is the Proton donor; for delta-elimination activity of the active site.

This sequence belongs to the FPG family. Monomer. Zn(2+) is required as a cofactor.

The enzyme catalyses Hydrolysis of DNA containing ring-opened 7-methylguanine residues, releasing 2,6-diamino-4-hydroxy-5-(N-methyl)formamidopyrimidine.. It catalyses the reaction 2'-deoxyribonucleotide-(2'-deoxyribose 5'-phosphate)-2'-deoxyribonucleotide-DNA = a 3'-end 2'-deoxyribonucleotide-(2,3-dehydro-2,3-deoxyribose 5'-phosphate)-DNA + a 5'-end 5'-phospho-2'-deoxyribonucleoside-DNA + H(+). Functionally, involved in base excision repair of DNA damaged by oxidation or by mutagenic agents. Acts as a DNA glycosylase that recognizes and removes damaged bases. Has a preference for oxidized purines, such as 7,8-dihydro-8-oxoguanine (8-oxoG). Has AP (apurinic/apyrimidinic) lyase activity and introduces nicks in the DNA strand. Cleaves the DNA backbone by beta-delta elimination to generate a single-strand break at the site of the removed base with both 3'- and 5'-phosphates. In Ralstonia pickettii (strain 12J), this protein is Formamidopyrimidine-DNA glycosylase.